Reading from the N-terminus, the 160-residue chain is Ribosomal RNA large subunit methyltransferase H (160 aa).

S-adenosyl-L-methionine contacts are provided by residues leucine 77, glycine 109, and 128–133 (LSNLTF).

Belongs to the RNA methyltransferase RlmH family. In terms of assembly, homodimer.

It is found in the cytoplasm. It carries out the reaction pseudouridine(1915) in 23S rRNA + S-adenosyl-L-methionine = N(3)-methylpseudouridine(1915) in 23S rRNA + S-adenosyl-L-homocysteine + H(+). Functionally, specifically methylates the pseudouridine at position 1915 (m3Psi1915) in 23S rRNA. The protein is Ribosomal RNA large subunit methyltransferase H of Desulforamulus reducens (strain ATCC BAA-1160 / DSM 100696 / MI-1) (Desulfotomaculum reducens).